A 559-amino-acid chain; its full sequence is SH3 domain-binding protein 2 (559 aa).

Positions 26 to 130 (GVAKAGYLHK…WMAFVRREIG (105 aa)) constitute a PH domain. The tract at residues 164 to 449 (LSSYPMDNED…EDSDEDYEKV (286 aa)) is disordered. A compositionally biased stretch (acidic residues) spans 170–184 (DNEDYEHEDEDDSYL). A phosphotyrosine; by SYK mark is found at Y174 and Y183. The short motif at 201-210 (PPAYPPPPVP) is the SH3-binding element. Composition is skewed to pro residues over residues 202–213 (PAYPPPPVPVPR) and 233–242 (PLLPPPPPKR). Positions 252–265 (EDAKDALGLRRVEP) are enriched in basic and acidic residues. S277 is modified (phosphoserine). The segment covering 313 to 327 (TSSVSSSTTMAVATS) has biased composition (low complexity). Positions 360 to 371 (KIAEEPSPREAA) are enriched in basic and acidic residues. Pro residues predominate over residues 375–386 (PVPPVAPRPPVQ). A phosphoserine mark is found at S414 and S425. The segment covering 437–446 (TGEEDSDEDY) has biased composition (acidic residues). Residue Y446 is modified to Phosphotyrosine; by SYK. Residues 455 to 553 (VFVNTTESCE…HQSLLLRHPY (99 aa)) enclose the SH2 domain.

Post-translationally, phosphorylated. Phosphorylation at Tyr-446 may stimulate the activity of the LYN kinase.

Its function is as follows. Binds differentially to the SH3 domains of certain proteins of signal transduction pathways. Binds to phosphatidylinositols; linking the hemopoietic tyrosine kinase fes to the cytoplasmic membrane in a phosphorylation dependent mechanism. The polypeptide is SH3 domain-binding protein 2 (Sh3bp2) (Mus musculus (Mouse)).